A 7968-amino-acid polypeptide reads, in one-letter code: Obscurin (7968 aa).

Ig-like domains lie at 10 to 100 (PRFL…LQVD), 110 to 202 (PHFL…LVVD), 236 to 322 (PASP…QTYS), 331 to 414 (PAVP…RTVA), and 420 to 508 (GNLL…VSAP). An intrachain disulfide couples Cys31 to Cys82. The disordered stretch occupies residues 228–249 (EAMRAEGAPASPPSTGTRTCTV). Polar residues predominate over residues 240 to 249 (PSTGTRTCTV). Intrachain disulfides connect Cys259–Cys311 and Cys354–Cys404. Ser395 bears the Phosphoserine mark. A Fibronectin type-III 1 domain is found at 515 to 612 (PPVDPVVKAR…FPGTVHLAPK (98 aa)). 12 Ig-like domains span residues 619 to 698 (LKAV…MEVR), 701 to 790 (PGLT…YQLS), 798 to 884 (LHKD…LRVS), 886 to 977 (PKVV…DVKE), 978 to 1066 (PKVV…FRLH), 1070 to 1161 (PKMM…HITE), 1162 to 1252 (PKGV…LHIT), 1254 to 1345 (PKAV…DVSE), 1346 to 1432 (PKAV…LSFS), 1438 to 1524 (PKVV…LSFH), 1530 to 1621 (PKAV…HVAE), and 1622 to 1719 (PKVV…PQIS). Disulfide bonds link Cys819-Cys870, Cys912-Cys962, Cys1004-Cys1054, Cys1096-Cys1146, Cys1188-Cys1238, Cys1280-Cys1330, Cys1372-Cys1422, Cys1464-Cys1514, Cys1556-Cys1606, Cys1648-Cys1698, Cys1723-Cys1791, and Cys1830-Cys1880. One can recognise a Fibronectin type-III 2 domain in the interval 1731–1808 (KEHEDIILTA…DFPVQVEEVA (78 aa)). 29 Ig-like domains span residues 1809–1894 (AKFC…LTVS), 1896–1982 (PRVV…AALR), 1987–2071 (PVLF…AKLT), 2077–2162 (VRLV…LVVT), 2165–2249 (PVSF…ASVK), 2289–2380 (PVTL…QSIT), 2468–2559 (PVVL…REVT), 2564–2643 (LQDA…LEVR), 2646–2730 (PVVF…ARVR), 2736–2823 (VGIT…LIVR), 2826–2908 (PAAI…STAS), 2920–2999 (EELT…AQLL), 3003–3092 (RRVH…LRVT), 3095–3183 (PSVF…VHAR), 3184–3268 (PVRF…ATLT), 3273–3356 (PAQF…ASLT), 3359–3444 (PMPA…ATLT), 3449–3532 (PAKF…ATLT), 3537–3620 (PARF…AMLT), 3625–3708 (PIKF…AMLT), 3713–3796 (PSKF…ATLT), 3801–3884 (PARF…ATLT), 3890–3973 (PVFR…ATLT), 3978–4062 (PVRF…ASLS), 4068–4160 (PKFK…PEVT), 4171–4239 (TADE…NHAS), 4248–4337 (PEVT…LKVT), 4340–4427 (NTVV…FLTV), and 4430–4518 (WRLE…ARLT). Cystine bridges form between Cys2187/Cys2237, Cys2311/Cys2361, and Cys2490/Cys2540. Cys2668 and Cys2718 are oxidised to a cystine. 2 disulfides stabilise this stretch: Cys2848–Cys2898 and Cys2937–Cys2987. Residue Ser2889 is modified to Phosphoserine. Intrachain disulfides connect Cys3117–Cys3167, Cys3206–Cys3256, Cys3295–Cys3344, Cys3383–Cys3432, Cys3471–Cys3520, Cys3559–Cys3608, Cys3647–Cys3696, Cys3735–Cys3784, Cys3823–Cys3872, Cys3911–Cys3961, Cys4000–Cys4050, and Cys4089–Cys4141. Residue Ser4015 is modified to Phosphoserine. An intrachain disulfide couples Cys4453 to Cys4508. The 95-residue stretch at 4525–4619 (PPEDAEVVAR…LPQTVRLAEP (95 aa)) folds into the Fibronectin type-III 3 domain. The 91-residue stretch at 4624 to 4714 (PPQPSAPESR…AAATFQVALS (91 aa)) folds into the Ig-like 47 domain. The disordered stretch occupies residues 4749 to 4785 (MSREPTLDSISELPEEDGRSQRLPQEAEEVAPDLSEG). Phosphoserine is present on Ser4750. Phosphothreonine is present on Thr4754. Ser4757 carries the post-translational modification Phosphoserine. Thr4788 is modified (phosphothreonine). Position 4805 is a phosphoserine (Ser4805). A disordered region spans residues 4820-4860 (LKKAGRPGTSPLASKVGAPAAPSVKPQQQQEPLAAVRPPLG). The IQ domain maps to 4872–4901 (MDKAAVKIQAAFKGYKVRKEMKQQEGPMFS). Ig-like domains follow at residues 4898 to 4989 (PMFS…VVVS) and 5126 to 5215 (PVFL…AELR). Intrachain disulfides connect Cys4919/Cys4971 and Cys5147/Cys5199. Residues 5238–5256 (AQGYLSSREQEGTESTTDE) show a composition bias toward polar residues. The tract at residues 5238-5257 (AQGYLSSREQEGTESTTDEG) is disordered. 2 Ig-like domains span residues 5260 to 5349 (PQVV…ARLL) and 5371 to 5467 (PRML…LHVS). The segment at 5554–5596 (AKLQVPGGDSDEDSKTPSASPRHGRSRPSSSIQESSSESEDGD) is disordered. A Phosphoserine modification is found at Ser5563. A Phosphothreonine modification is found at Thr5569. Over residues 5570–5589 (PSASPRHGRSRPSSSIQESS) the composition is skewed to low complexity. Phosphoserine is present on residues Ser5571 and Ser5573. Residues 5600-5667 (EIFDIYVVTA…SPAYLDRRLK (68 aa)) enclose the SH3 domain. The 185-residue stretch at 5693–5877 (RLSSVIQELL…SALPQRAENK (185 aa)) folds into the DH domain. In terms of domain architecture, PH spans 5895-6004 (EPIRQGHFIV…WVKEICGIQQ (110 aa)). Position 5975 (Arg5975) interacts with a 1,2-diacyl-sn-glycero-3-phospho-(1D-myo-inositol-4,5-bisphosphate). A 1,2-diacyl-sn-glycero-3-phospho-(1D-myo-inositol-3,4-bisphosphate) is bound at residue Arg5980. Ig-like domains are found at residues 6014–6097 (PDFE…GNCS) and 6108–6200 (PRFV…LRIQ). Cystine bridges form between Cys6035–Cys6087 and Cys6129–Cys6182. Residues 6237–6296 (RLLGPKAPGPSTGDLTGPGPCPRGAPALQETGSQPPVTGTSEAPAVPPRVPQPLLHEGPE) form a disordered region. Residues 6266–6277 (ETGSQPPVTGTS) are compositionally biased toward polar residues. In terms of domain architecture, Ig-like 54 spans 6357-6445 (PSMQVTIEDV…GQVLCKAELL (89 aa)). Residues 6468-6721 (YEVKEEIGRG…AAQCLSHPWF (254 aa)) form the Protein kinase 1 domain. ATP-binding positions include 6474-6482 (IGRGVFGFV) and Lys6497. Catalysis depends on Asp6587, which acts as the Proton acceptor. Disordered stretches follow at residues 6777-6863 (GVAR…AQGC), 6952-7176 (SGTH…TMRK), and 7217-7272 (VSQS…TPWE). Residue Ser6831 is modified to Phosphoserine. Positions 7052 to 7061 (AVAPCPPGSF) are enriched in pro residues. Residues 7115–7139 (SSPGSASQASSSQVSSLRVGSSQVG) show a composition bias toward low complexity. Over residues 7160-7172 (DSTPTLQRPQEQA) the composition is skewed to polar residues. Residues 7227–7242 (EARAESQSEEQQEARA) are compositionally biased toward basic and acidic residues. Ser7244 bears the Phosphoserine mark. An Ig-like 55 domain is found at 7463–7552 (PTFLRELSDE…GTVTTTGVLR (90 aa)). Cys7484 and Cys7536 form a disulfide bridge. The region spanning 7557 to 7649 (PSSSPCPDIG…PSEQVLLGGP (93 aa)) is the Fibronectin type-III 4 domain. Residues 7672–7924 (FAFQTQIQRG…ASSCLQCPWL (253 aa)) form the Protein kinase 2 domain. Residues 7678–7686 (IQRGRFSVV) and Lys7701 contribute to the ATP site. Residue Asp7791 is the Proton acceptor of the active site.

Belongs to the protein kinase superfamily. CAMK Ser/Thr protein kinase family. As to quaternary structure, interacts (via protein kinase domain 2) with CDH2 and (via protein kinase domain 1) with ATP1B1. Isoform 3 interacts with TTN/titin and calmodulin. Isoform 3 interacts with ANK1 isoform Mu17/ank1.5. Mg(2+) serves as cofactor. Autophosphorylated by protein kinase domains 1 and 2.

Its subcellular location is the cytoplasm. It is found in the myofibril. The protein localises to the sarcomere. The protein resides in the m line. It localises to the z line. Its subcellular location is the cell membrane. It is found in the sarcolemma. The protein localises to the nucleus. It carries out the reaction L-seryl-[protein] + ATP = O-phospho-L-seryl-[protein] + ADP + H(+). The catalysed reaction is L-threonyl-[protein] + ATP = O-phospho-L-threonyl-[protein] + ADP + H(+). In terms of biological role, structural component of striated muscles which plays a role in myofibrillogenesis. Probably involved in the assembly of myosin into sarcomeric A bands in striated muscle. Has serine/threonine protein kinase activity and phosphorylates N-cadherin CDH2 and sodium/potassium-transporting ATPase subunit ATP1B1. Binds (via the PH domain) strongly to phosphatidylinositol 3,4-bisphosphate (PtdIns(3,4)P2) and phosphatidylinositol 4,5-bisphosphate (PtdIns(4,5)P2), and to a lesser extent to phosphatidylinositol 3-phosphate (PtdIns(3)P), phosphatidylinositol 4-phosphate (PtdIns(4)P), phosphatidylinositol 5-phosphate (PtdIns(5)P) and phosphatidylinositol 3,4,5-trisphosphate (PtdIns(3,4,5)P3). This is Obscurin (OBSCN) from Homo sapiens (Human).